The following is a 207-amino-acid chain: MARYTGPKAKLSRREGTDLFLKSSRRSLADKCKLDSKPGQHGRTSGARTSDYGNQLREKQKVKRIYGVLERQFRRYFAEADRRKGNTGENLLQLLESRLDNVVYRMGFGSTRAEARQLVSHKAILVNGQTLNVPSAQIKSGDVITIREQSKKQVRIAEALSLAEQSGFPTWVAVDAKKFEGTFKQVPDRADISGDINESLIVELYSR.

The segment at Asp-30–Asn-54 is disordered. The segment covering Gly-42–Gly-53 has biased composition (polar residues). One can recognise an S4 RNA-binding domain in the interval Ser-97–Leu-160.

The protein belongs to the universal ribosomal protein uS4 family. Part of the 30S ribosomal subunit. Contacts protein S5. The interaction surface between S4 and S5 is involved in control of translational fidelity.

Its function is as follows. One of the primary rRNA binding proteins, it binds directly to 16S rRNA where it nucleates assembly of the body of the 30S subunit. Functionally, with S5 and S12 plays an important role in translational accuracy. This is Small ribosomal subunit protein uS4 from Cupriavidus taiwanensis (strain DSM 17343 / BCRC 17206 / CCUG 44338 / CIP 107171 / LMG 19424 / R1) (Ralstonia taiwanensis (strain LMG 19424)).